We begin with the raw amino-acid sequence, 94 residues long: Small ribosomal subunit protein uS19 (94 aa).

Belongs to the universal ribosomal protein uS19 family.

Functionally, protein S19 forms a complex with S13 that binds strongly to the 16S ribosomal RNA. This Wolbachia pipientis wMel protein is Small ribosomal subunit protein uS19.